The chain runs to 356 residues: Phenylalanine dehydrogenase (356 aa).

Arg43 lines the NAD(+) pocket. An L-phenylalanine-binding site is contributed by Lys67. Lys79 functions as the Proton donor/acceptor in the catalytic mechanism. 118-119 is a binding site for L-phenylalanine; the sequence is PD. NAD(+) is bound by residues Asp119, Ser150, Thr154, 183–189, 206–207, Arg211, 240–241, and 261–263; these read GLGAVGG, DT, AM, and AAN. An L-phenylalanine-binding site is contributed by Asn263.

The protein belongs to the Glu/Leu/Phe/Val dehydrogenases family. As to quaternary structure, homotetramer, dimer of dimers.

It carries out the reaction L-phenylalanine + NAD(+) + H2O = 3-phenylpyruvate + NH4(+) + NADH + H(+). Its pathway is amino-acid biosynthesis; L-phenylalanine biosynthesis; L-phenylalanine from phenylpyruvate (PDH route): step 1/1. Its activity is regulated as follows. Subject to competitive inhibition by 3-phenylpropionate for the conversion of L-phenylalanine to phenylpyruvate. Subject to competitive inhibition by D-phenylalanine for the conversion of phenylpyruvate to L-phenylalanine. Its function is as follows. Catalyzes the reversible NAD(+)-dependent oxidative deamination of L-phenylalanine to phenylpyruvate. The protein is Phenylalanine dehydrogenase of Rhodococcus sp.